Consider the following 198-residue polypeptide: Ribosomal RNA small subunit methyltransferase G (198 aa).

S-adenosyl-L-methionine-binding positions include Gly74, Phe79, 123–124 (IQ), and Arg136.

The protein belongs to the methyltransferase superfamily. RNA methyltransferase RsmG family.

Its subcellular location is the cytoplasm. It catalyses the reaction guanosine(527) in 16S rRNA + S-adenosyl-L-methionine = N(7)-methylguanosine(527) in 16S rRNA + S-adenosyl-L-homocysteine. Its function is as follows. Specifically methylates the N7 position of guanine in position 527 of 16S rRNA. The chain is Ribosomal RNA small subunit methyltransferase G from Orientia tsutsugamushi (strain Ikeda) (Rickettsia tsutsugamushi).